A 237-amino-acid polypeptide reads, in one-letter code: MEKLEMIYEGKGKKMWSVKGHDDLLIAEFKDDLTAFNAEKKGSESGKGALNNKISTALFKLLKSKGIETALVDTINDTEQVVKKCKIIPLEVVVRNIATGSLSKRLAIKEGTVLPFTLVEFYYKDDALGDPLVNDEHCIIMDLVKSENDLDRLKHLGREINSILLPFFKEKGLKLVDFKIEFGVDKDGNILLADEISPDSCRFWDSVTNEKMDKDRFRQDLGSVKVAYEEVLRRILS.

This sequence belongs to the SAICAR synthetase family.

It catalyses the reaction 5-amino-1-(5-phospho-D-ribosyl)imidazole-4-carboxylate + L-aspartate + ATP = (2S)-2-[5-amino-1-(5-phospho-beta-D-ribosyl)imidazole-4-carboxamido]succinate + ADP + phosphate + 2 H(+). The protein operates within purine metabolism; IMP biosynthesis via de novo pathway; 5-amino-1-(5-phospho-D-ribosyl)imidazole-4-carboxamide from 5-amino-1-(5-phospho-D-ribosyl)imidazole-4-carboxylate: step 1/2. The polypeptide is Phosphoribosylaminoimidazole-succinocarboxamide synthase (Campylobacter fetus subsp. fetus (strain 82-40)).